Here is a 242-residue protein sequence, read N- to C-terminus: MTHSPLAQFDIKKLIDIKMFGFDVSFTNSSIYMLLASILALTYFYLAFYNRKLVPSRLQVSAEIVYNLVADMLNQNIGVKGRKFIPLVFSLFIFILFCNLLGMTPYSFTTTSHIIVTFTLAILVFLMVTIVGFVKHGLRFLTLFLPHGTPLWLAPLMIVIELFTYLARPVSLSLRLAANMMAGHVLLKVIAGFTVSLMIYLKFLPIPIMVILIGFEIFVAILQAYIFTILSCMYLNDAINLH.

The next 6 helical transmembrane spans lie at 29-49, 84-104, 114-134, 140-160, 181-201, and 203-223; these read SSIY…LAFY, FIPL…LGMT, IIVT…VGFV, FLTL…MIVI, MAGH…MIYL, and FLPI…AILQ.

It belongs to the ATPase A chain family. As to quaternary structure, F-type ATPases have 2 components, CF(1) - the catalytic core - and CF(0) - the membrane proton channel. CF(1) has five subunits: alpha(3), beta(3), gamma(1), delta(1), epsilon(1). CF(0) has three main subunits: a(1), b(2) and c(9-12). The alpha and beta chains form an alternating ring which encloses part of the gamma chain. CF(1) is attached to CF(0) by a central stalk formed by the gamma and epsilon chains, while a peripheral stalk is formed by the delta and b chains.

The protein localises to the cell inner membrane. Functionally, key component of the proton channel; it plays a direct role in the translocation of protons across the membrane. The chain is ATP synthase subunit a from Rickettsia conorii (strain ATCC VR-613 / Malish 7).